The primary structure comprises 231 residues: Casparian strip membrane protein 1 (231 aa).

The Cytoplasmic portion of the chain corresponds to 1–69 (MSTSETATVI…FRQSDRGSRC (69 aa)). Residues 70–90 (LAFLDFLLRIAAFGPALAAAI) form a helical membrane-spanning segment. Over 91–117 (ATGTSDETLSVFTEFFQFRARFDDFPA) the chain is Extracellular. The chain crosses the membrane as a helical span at residues 118-138 (FLFLMVANAIAAGYLVLSLPF). Residues 139–152 (SAVVVLRPQATGLR) lie on the Cytoplasmic side of the membrane. Residues 153–173 (LLLLVCDTIMIGLLTAAAAAA) traverse the membrane as a helical segment. The Extracellular segment spans residues 174 to 207 (AAIVELAHNGNERANWVAICMQFHGFCQRTSGAV). A helical transmembrane segment spans residues 208–228 (VASFLSVFLFLLLVVLAAFAI). Residues 229-231 (RKR) are Cytoplasmic-facing.

It belongs to the Casparian strip membrane proteins (CASP) family. Homodimer and heterodimers.

The protein resides in the cell membrane. In terms of biological role, regulates membrane-cell wall junctions and localized cell wall deposition. Required for establishment of the Casparian strip membrane domain (CSD) and the subsequent formation of Casparian strips, a cell wall modification of the root endodermis that determines an apoplastic barrier between the intraorganismal apoplasm and the extraorganismal apoplasm and prevents lateral diffusion. In Brachypodium distachyon (Purple false brome), this protein is Casparian strip membrane protein 1.